The chain runs to 85 residues: RNA-binding protein Hfq (85 aa).

The Sm domain occupies 10-70 (DIFLNGARKN…ISTINPAKPL (61 aa)).

Belongs to the Hfq family. In terms of assembly, homohexamer.

RNA chaperone that binds small regulatory RNA (sRNAs) and mRNAs to facilitate mRNA translational regulation in response to envelope stress, environmental stress and changes in metabolite concentrations. Also binds with high specificity to tRNAs. This is RNA-binding protein Hfq from Clostridium botulinum (strain 657 / Type Ba4).